Consider the following 93-residue polypeptide: Acylphosphatase (93 aa).

One can recognise an Acylphosphatase-like domain in the interval 6–93; it reads RLVAWVRGQV…RGGYEGFAIR (88 aa). Active-site residues include R21 and N40.

The protein belongs to the acylphosphatase family.

The enzyme catalyses an acyl phosphate + H2O = a carboxylate + phosphate + H(+). In Streptomyces coelicolor (strain ATCC BAA-471 / A3(2) / M145), this protein is Acylphosphatase (acyP).